Here is a 108-residue protein sequence, read N- to C-terminus: Protein S100-A15A (108 aa).

Positions 53-88 constitute an EF-hand domain; sequence KEPYYITELFQAADKNKDNQICFDEFLYILGKLVKD. 5 residues coordinate Ca(2+): D66, N68, D70, Q72, and E77.

It belongs to the S-100 family.

The polypeptide is Protein S100-A15A (S100A15A) (Pongo abelii (Sumatran orangutan)).